Reading from the N-terminus, the 269-residue chain is Tryptophan synthase alpha chain (269 aa).

Catalysis depends on proton acceptor residues Glu-49 and Asp-60.

It belongs to the TrpA family. Tetramer of two alpha and two beta chains.

It catalyses the reaction (1S,2R)-1-C-(indol-3-yl)glycerol 3-phosphate + L-serine = D-glyceraldehyde 3-phosphate + L-tryptophan + H2O. The protein operates within amino-acid biosynthesis; L-tryptophan biosynthesis; L-tryptophan from chorismate: step 5/5. In terms of biological role, the alpha subunit is responsible for the aldol cleavage of indoleglycerol phosphate to indole and glyceraldehyde 3-phosphate. The protein is Tryptophan synthase alpha chain of Actinobacillus succinogenes (strain ATCC 55618 / DSM 22257 / CCUG 43843 / 130Z).